The sequence spans 241 residues: MNYAKLCEDLTKWIKEEVESANLKGAVFGISGGIDSAVLACLCKKAFGDNALGLIMPIKSNPKDEEDARILAKSIGLRFTKVDLNESYDALIGTFEKNSVEMAASNIKPRLRMITLYYYAQNNGYMVLSGSNRSEFMTGYFTKYGDSGADLMPLLNLYKTDIFEMAKVLGVPDVIINKKPSAGLWEGQTDEDEFGFTYEELDDYLMNNSNTKSKDLIDKKIKQSEHKRKFAKSFEFDRRNY.

Residue 29–36 (GISGGIDS) participates in ATP binding. Position 35 (D35) interacts with Mg(2+). R110 contacts deamido-NAD(+). Position 135 (E135) interacts with Mg(2+). K143 and D150 together coordinate deamido-NAD(+). Residues K159 and S181 each coordinate ATP. 226 to 227 (HK) is a deamido-NAD(+) binding site.

This sequence belongs to the NAD synthetase family. As to quaternary structure, homodimer.

The catalysed reaction is deamido-NAD(+) + NH4(+) + ATP = AMP + diphosphate + NAD(+) + H(+). The protein operates within cofactor biosynthesis; NAD(+) biosynthesis; NAD(+) from deamido-NAD(+) (ammonia route): step 1/1. Functionally, catalyzes the ATP-dependent amidation of deamido-NAD to form NAD. Uses ammonia as a nitrogen source. The chain is NH(3)-dependent NAD(+) synthetase from Finegoldia magna (strain ATCC 29328 / DSM 20472 / WAL 2508) (Peptostreptococcus magnus).